The chain runs to 450 residues: Probable ECA polymerase (450 aa).

The next 11 membrane-spanning stretches (helical) occupy residues 6–26 (FSGL…LTWF), 37–57 (VFFS…TSVL), 63–83 (VGVA…CFYA), 118–138 (VILM…NGFL), 155–175 (GVAL…VYFL), 181–201 (AWLF…MIVG), 207–227 (IIIA…ISLW), 228–248 (MLAA…LKRY), 341–361 (LVVM…GLII), 378–398 (YKAA…IVLA), and 410–430 (VFFI…YWLF).

This sequence belongs to the WzyE family. In terms of assembly, probably part of a complex composed of WzxE, WzyE and WzzE.

The protein resides in the cell inner membrane. Its pathway is bacterial outer membrane biogenesis; enterobacterial common antigen biosynthesis. In terms of biological role, probably involved in the polymerization of enterobacterial common antigen (ECA) trisaccharide repeat units. The chain is Probable ECA polymerase from Shigella flexneri.